A 650-amino-acid chain; its full sequence is Chaperone protein DnaK (650 aa).

Phosphothreonine; by autocatalysis is present on Thr200. The span at 613 to 634 (QAGAAGAAGAAAAEGAAQGGAQ) shows a compositional bias: low complexity. A disordered region spans residues 613–637 (QAGAAGAAGAAAAEGAAQGGAQTAD).

This sequence belongs to the heat shock protein 70 family.

Functionally, acts as a chaperone. This Burkholderia thailandensis (strain ATCC 700388 / DSM 13276 / CCUG 48851 / CIP 106301 / E264) protein is Chaperone protein DnaK.